The primary structure comprises 65 residues: Large ribosomal subunit protein bL33m (65 aa).

The transit peptide at 1–8 (MFLSAVTF) directs the protein to the mitochondrion.

This sequence belongs to the bacterial ribosomal protein bL33 family. As to quaternary structure, component of the mitochondrial ribosome large subunit (39S) which comprises a 16S rRNA and about 50 distinct proteins.

The protein localises to the mitochondrion. In Bos taurus (Bovine), this protein is Large ribosomal subunit protein bL33m (MRPL33).